Consider the following 685-residue polypeptide: Bifunctional lycopene cyclase/phytoene synthase (685 aa).

Residues 15–255 (TLSYRHFHLL…LVSACFTFDR (241 aa)) are lycopene beta-cyclase. 7 helical membrane-spanning segments follow: residues 21–41 (FHLL…RPFL), 48–68 (KLIL…NLIV), 92–114 (YFFF…RWAL), 129–149 (LATP…KAAV), 156–176 (YFGM…WGSV), 187–207 (GLAP…ASDV), and 231–251 (LPIE…SACF). Positions 262–685 (QSVAENAPPL…RAVSAVYFGV (424 aa)) are phytoene synthase.

This sequence in the N-terminal section; belongs to the lycopene beta-cyclase family. The protein in the C-terminal section; belongs to the phytoene/squalene synthase family.

The protein resides in the membrane. The enzyme catalyses all-trans-lycopene = gamma-carotene. The catalysed reaction is gamma-carotene = all-trans-beta-carotene. It carries out the reaction 2 (2E,6E,10E)-geranylgeranyl diphosphate = 15-cis-phytoene + 2 diphosphate. It participates in carotenoid biosynthesis; beta-carotene biosynthesis. Its pathway is carotenoid biosynthesis; phytoene biosynthesis; all-trans-phytoene from geranylgeranyl diphosphate: step 1/1. Its function is as follows. Bifunctional enzyme that catalyzes the reactions from geranylgeranyl diphosphate to phytoene (phytoene synthase) and lycopene to beta-carotene via the intermediate gamma-carotene (lycopene cyclase). This Sporisorium reilianum (strain SRZ2) (Maize head smut fungus) protein is Bifunctional lycopene cyclase/phytoene synthase.